The chain runs to 294 residues: Probable metallo-hydrolase BURPS1710b_2304 (294 aa).

7 residues coordinate a divalent metal cation: His-68, His-70, Asp-72, His-73, His-143, Asp-170, and His-212.

Belongs to the metallo-beta-lactamase superfamily. The cofactor is a divalent metal cation.

In terms of biological role, probable hydrolase. Does not have beta-lactamase activity. This Burkholderia pseudomallei (strain 1710b) protein is Probable metallo-hydrolase BURPS1710b_2304.